Reading from the N-terminus, the 252-residue chain is 3-dehydroquinate dehydratase (252 aa).

Residues serine 21, 46 to 48 (EWR), and arginine 82 contribute to the 3-dehydroquinate site. The active-site Proton donor/acceptor is the histidine 143. Lysine 170 functions as the Schiff-base intermediate with substrate in the catalytic mechanism. Positions 213, 232, and 236 each coordinate 3-dehydroquinate.

Belongs to the type-I 3-dehydroquinase family. As to quaternary structure, homodimer.

It catalyses the reaction 3-dehydroquinate = 3-dehydroshikimate + H2O. The protein operates within metabolic intermediate biosynthesis; chorismate biosynthesis; chorismate from D-erythrose 4-phosphate and phosphoenolpyruvate: step 3/7. Involved in the third step of the chorismate pathway, which leads to the biosynthesis of aromatic amino acids. Catalyzes the cis-dehydration of 3-dehydroquinate (DHQ) and introduces the first double bond of the aromatic ring to yield 3-dehydroshikimate. In Salmonella choleraesuis (strain SC-B67), this protein is 3-dehydroquinate dehydratase.